The primary structure comprises 429 residues: Adenylosuccinate synthetase (429 aa).

Residues 12–18 (GDEGKGK) and 40–42 (GHT) each bind GTP. Aspartate 13 acts as the Proton acceptor in catalysis. Mg(2+)-binding residues include aspartate 13 and glycine 40. Residues 13–16 (DEGK), 38–41 (NAGH), threonine 128, arginine 142, glutamine 223, and arginine 302 each bind IMP. Catalysis depends on histidine 41, which acts as the Proton donor. 298–304 (TVTGRPR) contributes to the substrate binding site. GTP-binding positions include arginine 304, 330 to 332 (LLD), and 412 to 414 (SVG).

It belongs to the adenylosuccinate synthetase family. In terms of assembly, homodimer. Mg(2+) is required as a cofactor.

The protein resides in the cytoplasm. The catalysed reaction is IMP + L-aspartate + GTP = N(6)-(1,2-dicarboxyethyl)-AMP + GDP + phosphate + 2 H(+). The protein operates within purine metabolism; AMP biosynthesis via de novo pathway; AMP from IMP: step 1/2. Plays an important role in the de novo pathway of purine nucleotide biosynthesis. Catalyzes the first committed step in the biosynthesis of AMP from IMP. The chain is Adenylosuccinate synthetase from Lactobacillus delbrueckii subsp. bulgaricus (strain ATCC 11842 / DSM 20081 / BCRC 10696 / JCM 1002 / NBRC 13953 / NCIMB 11778 / NCTC 12712 / WDCM 00102 / Lb 14).